We begin with the raw amino-acid sequence, 448 residues long: Tubulin beta chain (448 aa).

Residues Q11, E69, S138, G142, T143, G144, N204, and N226 each contribute to the GTP site. E69 contributes to the Mg(2+) binding site. The interval 429–448 (GIDEGDEDYEIEEEKEPLEY) is disordered.

It belongs to the tubulin family. Dimer of alpha and beta chains. A typical microtubule is a hollow water-filled tube with an outer diameter of 25 nm and an inner diameter of 15 nM. Alpha-beta heterodimers associate head-to-tail to form protofilaments running lengthwise along the microtubule wall with the beta-tubulin subunit facing the microtubule plus end conferring a structural polarity. Microtubules usually have 13 protofilaments but different protofilament numbers can be found in some organisms and specialized cells. Mg(2+) is required as a cofactor.

The protein localises to the cytoplasm. It localises to the cytoskeleton. Tubulin is the major constituent of microtubules, a cylinder consisting of laterally associated linear protofilaments composed of alpha- and beta-tubulin heterodimers. Microtubules grow by the addition of GTP-tubulin dimers to the microtubule end, where a stabilizing cap forms. Below the cap, tubulin dimers are in GDP-bound state, owing to GTPase activity of alpha-tubulin. The polypeptide is Tubulin beta chain (nda3) (Schizosaccharomyces pombe (strain 972 / ATCC 24843) (Fission yeast)).